We begin with the raw amino-acid sequence, 196 residues long: Holliday junction branch migration complex subunit RuvA (196 aa).

The interval 1-63 (MYDYIKGTLV…DDAHLLFGFH (63 aa)) is domain I. The tract at residues 64 to 142 (TEDEKEVFLK…ELPAETTNTT (79 aa)) is domain II. The segment at 143–146 (ANQT) is flexible linker. Positions 147 to 196 (AGNQQLDEAMEALLALGYKATELKKVKAFFEDTNETAEQYIKSALKMLMK) are domain III.

This sequence belongs to the RuvA family. Homotetramer. Forms an RuvA(8)-RuvB(12)-Holliday junction (HJ) complex. HJ DNA is sandwiched between 2 RuvA tetramers; dsDNA enters through RuvA and exits via RuvB. An RuvB hexamer assembles on each DNA strand where it exits the tetramer. Each RuvB hexamer is contacted by two RuvA subunits (via domain III) on 2 adjacent RuvB subunits; this complex drives branch migration. In the full resolvosome a probable DNA-RuvA(4)-RuvB(12)-RuvC(2) complex forms which resolves the HJ.

The protein resides in the cytoplasm. In terms of biological role, the RuvA-RuvB-RuvC complex processes Holliday junction (HJ) DNA during genetic recombination and DNA repair, while the RuvA-RuvB complex plays an important role in the rescue of blocked DNA replication forks via replication fork reversal (RFR). RuvA specifically binds to HJ cruciform DNA, conferring on it an open structure. The RuvB hexamer acts as an ATP-dependent pump, pulling dsDNA into and through the RuvAB complex. HJ branch migration allows RuvC to scan DNA until it finds its consensus sequence, where it cleaves and resolves the cruciform DNA. This is Holliday junction branch migration complex subunit RuvA from Streptococcus thermophilus (strain ATCC BAA-491 / LMD-9).